The primary structure comprises 150 residues: Troponin C, isotype gamma (150 aa).

Residue methionine 1 is modified to N-acetylmethionine. EF-hand domains are found at residues 7–42 (EQLSALKKAFDSFDTDSKGFITPETVGVILRMMGVK), 43–78 (ISEKNLQQVIAETDEDGSGELEFEEFVELAAKFLIE), 83–118 (ALKAELKEAFRIYDKGGDGYITTDVLREILRELDNR), and 119–150 (LTEDDLDGIIEEVDEDGSGTLDFDEFMEMMSG). Ca(2+) is bound by residues aspartate 56, aspartate 58, serine 60, glutamate 62, and glutamate 67. 5 residues coordinate Ca(2+): aspartate 132, aspartate 134, serine 136, threonine 138, and glutamate 143.

This sequence belongs to the troponin C family.

Troponin is the central regulatory protein of striated muscle contraction. Tn consists of three components: Tn-I which is the inhibitor of actomyosin ATPase, Tn-T which contains the binding site for tropomyosin and Tn-C. The binding of calcium to Tn-C abolishes the inhibitory action of Tn on actin filaments. The chain is Troponin C, isotype gamma from Astacus leptodactylus (Turkish narrow-clawed crayfish).